We begin with the raw amino-acid sequence, 149 residues long: Transcription factor Atoh7 (149 aa).

A bHLH domain is found at Arg41–Leu93.

As to quaternary structure, forms a heterodimer with TCF3 isoform E47; interaction may be required for DNA-binding in certain situations. As to expression, expressed in retinal ganglion cells. Expressed in the cerebellum, trapezoid body, ventral nucleus of the lateral lamniscus and in areas of the auditory hindbrain such as the cochlear nucleus, lateral superior olive and medial nucleus of the trapezoid body. Expressed in the modiolar nerve root and in the cochlear in a small group of bushy neurons within the acoustic nerve. Expressed weakly in the sensory epithelia of the saccule and utricle.

It localises to the nucleus. It is found in the perikaryon. Its subcellular location is the cell projection. The protein resides in the axon. Functionally, transcription factor that binds to DNA at the consensus sequence 5'-CAG[GC]TG-3'. Dimerization with TCF3 isoform E47 may be required in certain situations. Binds to gene promoters and enhancer elements, and thereby regulates a transcriptional program of retinal ganglion cell (RGC) determinant genes. Although the exact mechanism is not certain, retinal transcription regulation by ATOH7 has a role in RGC determination and survival, photoreceptor population development, targeting of RGC axons to the optic nerve and development of the retino-hypothalamic tract. Binds to its own promoter and enhancer sequences, suggesting autoregulation of ATOH7 transcription. Required for retinal circadian rhythm photoentrainment. Plays a role in brainstem auditory signaling and binaural processing. In Mus musculus (Mouse), this protein is Transcription factor Atoh7.